The following is a 900-amino-acid chain: Translation initiation factor IF-2 (900 aa).

The segment covering Leu80–Arg95 has biased composition (basic and acidic residues). Disordered regions lie at residues Leu80–Arg106, Ala149–Val169, and Asp221–Lys268. Residues Gly253–Lys262 show a composition bias toward basic residues. The tr-type G domain occupies Thr397–Lys567. The segment at Gly406 to Thr413 is G1. Residue Gly406–Thr413 coordinates GTP. The interval Gly431–His435 is G2. A G3 region spans residues Asp453–Gly456. Residues Asp453–His457 and Asn507–Asp510 each bind GTP. Positions Asn507 to Asp510 are G4. The tract at residues Ser543–Lys545 is G5.

This sequence belongs to the TRAFAC class translation factor GTPase superfamily. Classic translation factor GTPase family. IF-2 subfamily.

The protein localises to the cytoplasm. Its function is as follows. One of the essential components for the initiation of protein synthesis. Protects formylmethionyl-tRNA from spontaneous hydrolysis and promotes its binding to the 30S ribosomal subunits. Also involved in the hydrolysis of GTP during the formation of the 70S ribosomal complex. This chain is Translation initiation factor IF-2, found in Chlorobium phaeovibrioides (strain DSM 265 / 1930) (Prosthecochloris vibrioformis (strain DSM 265)).